The following is a 318-amino-acid chain: Lymphatic vessel endothelial hyaluronic acid receptor 1 (318 aa).

Residues 1–23 form the signal peptide; the sequence is MLQHTSLVLLLASIWTTRHPVQG. The Extracellular portion of the chain corresponds to 24–234; sequence ADLVQDLSIS…EAAGFGGVPT (211 aa). The 91-residue stretch at 39 to 129 folds into the Link domain; that stretch reads GVALVGRNKN…SQKFKAYCHN (91 aa). An N-linked (GlcNAc...) asparagine glycan is attached at Asn52. Disulfide bonds link Cys60/Cys127 and Cys84/Cys105. Residue Asn129 is glycosylated (N-linked (GlcNAc...) asparagine). Residues 235–255 form a helical membrane-spanning segment; it reads ALLVLALLFFGAAAVLAVCYV. At 256–318 the chain is on the cytoplasmic side; it reads KRYVKAFPFT…TTVRCLEAEV (63 aa). Residues 284 to 305 show a composition bias toward basic and acidic residues; it reads ADDVNANEESKKTIKNPEEAKS. The tract at residues 284 to 318 is disordered; that stretch reads ADDVNANEESKKTIKNPEEAKSPPKTTVRCLEAEV.

Homodimer; disulfide-linked. Interacts with PDGFB and IGFBP3. Forms a transient ternary complex with PDGFB and PDGFRB in TGN. In terms of processing, O-glycosylated.

It is found in the membrane. In terms of biological role, ligand-specific transporter trafficking between intracellular organelles (TGN) and the plasma membrane. Plays a role in autocrine regulation of cell growth mediated by growth regulators containing cell surface retention sequence binding (CRS). May act as a hyaluronan (HA) transporter, either mediating its uptake for catabolism within lymphatic endothelial cells themselves, or its transport into the lumen of afferent lymphatic vessels for subsequent re-uptake and degradation in lymph nodes. Binds to pericelluar hyaluronan matrices deposited on the surface of leukocytes and facilitates cell adhesion and migration through lymphatic endothelium. The polypeptide is Lymphatic vessel endothelial hyaluronic acid receptor 1 (Lyve1) (Mus musculus (Mouse)).